A 195-amino-acid polypeptide reads, in one-letter code: MSIFKRAKKTVLIPPPHLLSGDEERVTILSAEGEIKVTGRRPTTLEEKIYYSMNLAAAIVGGDLHPSFKSMTYLFQKEMEFGSTQEKVNFGSRKPAPQTTYQVTKAREVYLQTQPLEKKIPMQTYSVSTEGATITFTGRFLFSSSHVGCDDNRTKLAGLDGFTTSNSYQRVKDYYAQETALALTFAAPEKRGKEK.

This sequence belongs to the novirhabdovirus matrix protein family. As to quaternary structure, homomultimer.

The protein localises to the virion. It localises to the host cytoplasm. In terms of biological role, the M protein has a crucial role in virus assembly and interacts with the RNP complex as well as with the viral membrane. In Salmo (IHNV), this protein is Matrix protein (M).